Consider the following 60-residue polypeptide: Large ribosomal subunit protein bL32 (60 aa).

The tract at residues 1–60 is disordered; it reads MAVQQNKKSRSARDMRRSHDALSENALSVEKTTGEVHLRHHVSPEGVYRGRKVVDKGADE. Residues 11 to 22 show a composition bias toward basic and acidic residues; that stretch reads SARDMRRSHDAL.

It belongs to the bacterial ribosomal protein bL32 family.

The sequence is that of Large ribosomal subunit protein bL32 from Pseudomonas putida (strain ATCC 700007 / DSM 6899 / JCM 31910 / BCRC 17059 / LMG 24140 / F1).